The chain runs to 757 residues: RNA-directed RNA polymerase catalytic subunit (757 aa).

A disordered region spans residues 50 to 82; that stretch reads SEKGKWTTNTETGAPQLNPIDGPLPEDNEPSGY. Over residues 55-64 the composition is skewed to polar residues; that stretch reads WTTNTETGAP. Short sequence motifs (nuclear localization signal) lie at residues 187–195 and 203–216; these read RKRRVRDNM and RTIG…NKRS. The promoter-binding site stretch occupies residues 249 to 256; that stretch reads RGFVYFVE. A RdRp catalytic domain is found at 286–483; sequence VRKMMTNSQD…GINMSKKKSY (198 aa).

This sequence belongs to the influenza viruses polymerase PB1 family. Influenza RNA polymerase is composed of three subunits: PB1, PB2 and PA. Interacts (via N-terminus) with PA (via C-terminus). Interacts (via C-terminus) with PB2 (via N-terminus); this interaction is essential for transcription initiation. Post-translationally, phosphorylated by host PRKCA.

The protein resides in the host nucleus. It is found in the host cytoplasm. The enzyme catalyses RNA(n) + a ribonucleoside 5'-triphosphate = RNA(n+1) + diphosphate. Functionally, RNA-dependent RNA polymerase which is responsible for replication and transcription of virus RNA segments. The transcription of viral mRNAs occurs by a unique mechanism called cap-snatching. 5' methylated caps of cellular mRNAs are cleaved after 10-13 nucleotides by PA. In turn, these short capped RNAs are used as primers by PB1 for transcription of viral mRNAs. During virus replication, PB1 initiates RNA synthesis and copy vRNA into complementary RNA (cRNA) which in turn serves as a template for the production of more vRNAs. This Influenza A virus (strain A/Memphis/110/1976 H3N2) protein is RNA-directed RNA polymerase catalytic subunit.